The primary structure comprises 857 residues: Catalase-peroxidase (857 aa).

Positions 207–330 (WHSAGTYRVS…LAAVQMGLIY (124 aa)) form a cross-link, tryptophyl-tyrosyl-methioninium (Trp-Tyr) (with M-356). Residue H208 is the Proton acceptor of the active site. The segment at residues 330 to 356 (YVNPEGPNGKPDPIAAAKDIRETFGRM) is a cross-link (tryptophyl-tyrosyl-methioninium (Tyr-Met) (with W-207)). Position 371 (H371) interacts with heme b.

It belongs to the peroxidase family. Peroxidase/catalase subfamily. As to quaternary structure, homodimer or homotetramer. It depends on heme b as a cofactor. Formation of the three residue Trp-Tyr-Met cross-link is important for the catalase, but not the peroxidase activity of the enzyme.

The enzyme catalyses H2O2 + AH2 = A + 2 H2O. The catalysed reaction is 2 H2O2 = O2 + 2 H2O. Its function is as follows. Bifunctional enzyme with both catalase and broad-spectrum peroxidase activity. The protein is Catalase-peroxidase of Rhodopirellula baltica (strain DSM 10527 / NCIMB 13988 / SH1).